Reading from the N-terminus, the 159-residue chain is Transmembrane protein 42 (159 aa).

The next 4 membrane-spanning stretches (helical) occupy residues 37–57 (FWGVFNCLCAGAFGALAAASA), 68–88 (GFCVLGIIMMATTNSLMWTFF), 100–120 (IASVTVTFSNILNSAFLGFVL), and 124–144 (CQEVLWWGGVFLILCGLTLIH).

It is found in the membrane. This Bos taurus (Bovine) protein is Transmembrane protein 42 (TMEM42).